The chain runs to 84 residues: Small ribosomal subunit protein bS18 (84 aa).

This sequence belongs to the bacterial ribosomal protein bS18 family. Part of the 30S ribosomal subunit. Forms a tight heterodimer with protein bS6.

Binds as a heterodimer with protein bS6 to the central domain of the 16S rRNA, where it helps stabilize the platform of the 30S subunit. This is Small ribosomal subunit protein bS18 from Ruthia magnifica subsp. Calyptogena magnifica.